The chain runs to 608 residues: 1-deoxy-D-xylulose-5-phosphate synthase (608 aa).

Residues His-80 and 121–123 (GHS) each bind thiamine diphosphate. Position 152 (Asp-152) interacts with Mg(2+). Thiamine diphosphate contacts are provided by residues 153-154 (GA), Asn-181, Tyr-282, and Glu-357. Asn-181 serves as a coordination point for Mg(2+).

This sequence belongs to the transketolase family. DXPS subfamily. Homodimer. Mg(2+) serves as cofactor. Requires thiamine diphosphate as cofactor.

The enzyme catalyses D-glyceraldehyde 3-phosphate + pyruvate + H(+) = 1-deoxy-D-xylulose 5-phosphate + CO2. The protein operates within metabolic intermediate biosynthesis; 1-deoxy-D-xylulose 5-phosphate biosynthesis; 1-deoxy-D-xylulose 5-phosphate from D-glyceraldehyde 3-phosphate and pyruvate: step 1/1. In terms of biological role, catalyzes the acyloin condensation reaction between C atoms 2 and 3 of pyruvate and glyceraldehyde 3-phosphate to yield 1-deoxy-D-xylulose-5-phosphate (DXP). In Buchnera aphidicola subsp. Acyrthosiphon pisum (strain 5A), this protein is 1-deoxy-D-xylulose-5-phosphate synthase.